The sequence spans 917 residues: Protein translocase subunit SecA (917 aa).

ATP-binding positions include glutamine 87, 105-109, and aspartate 501; that span reads GEGKT. Zn(2+) is bound by residues cysteine 901, cysteine 903, cysteine 912, and histidine 913.

Belongs to the SecA family. In terms of assembly, monomer and homodimer. Part of the essential Sec protein translocation apparatus which comprises SecA, SecYEG and auxiliary proteins SecDF-YajC and YidC. It depends on Zn(2+) as a cofactor.

It is found in the cell inner membrane. It localises to the cytoplasm. The catalysed reaction is ATP + H2O + cellular proteinSide 1 = ADP + phosphate + cellular proteinSide 2.. Its function is as follows. Part of the Sec protein translocase complex. Interacts with the SecYEG preprotein conducting channel. Has a central role in coupling the hydrolysis of ATP to the transfer of proteins into and across the cell membrane, serving both as a receptor for the preprotein-SecB complex and as an ATP-driven molecular motor driving the stepwise translocation of polypeptide chains across the membrane. In Granulibacter bethesdensis (strain ATCC BAA-1260 / CGDNIH1), this protein is Protein translocase subunit SecA.